We begin with the raw amino-acid sequence, 894 residues long: Protein translocase subunit SecA (894 aa).

ATP contacts are provided by residues Gln-87, 105 to 109 (GEGKT), and Asp-512. The interval 836–870 (EVEQAERERQAHAEQESSHYHAEGEGQDFSDLHIG) is disordered. Cys-875, Cys-877, Cys-886, and His-887 together coordinate Zn(2+).

Belongs to the SecA family. As to quaternary structure, monomer and homodimer. Part of the essential Sec protein translocation apparatus which comprises SecA, SecYEG and auxiliary proteins SecDF-YajC and YidC. The cofactor is Zn(2+).

The protein resides in the cell inner membrane. The protein localises to the cytoplasm. It catalyses the reaction ATP + H2O + cellular proteinSide 1 = ADP + phosphate + cellular proteinSide 2.. Functionally, part of the Sec protein translocase complex. Interacts with the SecYEG preprotein conducting channel. Has a central role in coupling the hydrolysis of ATP to the transfer of proteins into and across the cell membrane, serving both as a receptor for the preprotein-SecB complex and as an ATP-driven molecular motor driving the stepwise translocation of polypeptide chains across the membrane. This Glaesserella parasuis serovar 5 (strain SH0165) (Haemophilus parasuis) protein is Protein translocase subunit SecA.